We begin with the raw amino-acid sequence, 141 residues long: Hemoglobin subunit alpha (141 aa).

The region spanning 1–141 (VLSAADKGNV…VSTVLTSKYR (141 aa)) is the Globin domain. The residue at position 3 (Ser3) is a Phosphoserine. 2 positions are modified to N6-succinyllysine: Lys7 and Lys11. Lys16 is modified (N6-acetyllysine; alternate). At Lys16 the chain carries N6-succinyllysine; alternate. Residue Tyr24 is modified to Phosphotyrosine. A Phosphoserine modification is found at Ser35. Lys40 is subject to N6-succinyllysine. His58 provides a ligand contact to O2. His87 contributes to the heme b binding site. Position 102 is a phosphoserine (Ser102). Residue Thr108 is modified to Phosphothreonine. 2 positions are modified to phosphoserine: Ser124 and Ser131. Phosphothreonine is present on residues Thr134 and Thr137. Position 138 is a phosphoserine (Ser138).

Belongs to the globin family. Heterotetramer of two alpha chains and two beta chains. Red blood cells.

Its function is as follows. Involved in oxygen transport from the lung to the various peripheral tissues. Functionally, hemopressin acts as an antagonist peptide of the cannabinoid receptor CNR1. Hemopressin-binding efficiently blocks cannabinoid receptor CNR1 and subsequent signaling. In Macrotus californicus (Californian leaf-nosed bat), this protein is Hemoglobin subunit alpha (HBA).